The primary structure comprises 285 residues: Bifunctional protein FolD (285 aa).

NADP(+) contacts are provided by residues 166–168 and isoleucine 232; that span reads GAS.

It belongs to the tetrahydrofolate dehydrogenase/cyclohydrolase family. Homodimer.

It carries out the reaction (6R)-5,10-methylene-5,6,7,8-tetrahydrofolate + NADP(+) = (6R)-5,10-methenyltetrahydrofolate + NADPH. It catalyses the reaction (6R)-5,10-methenyltetrahydrofolate + H2O = (6R)-10-formyltetrahydrofolate + H(+). The protein operates within one-carbon metabolism; tetrahydrofolate interconversion. Its function is as follows. Catalyzes the oxidation of 5,10-methylenetetrahydrofolate to 5,10-methenyltetrahydrofolate and then the hydrolysis of 5,10-methenyltetrahydrofolate to 10-formyltetrahydrofolate. This is Bifunctional protein FolD from Aliivibrio salmonicida (strain LFI1238) (Vibrio salmonicida (strain LFI1238)).